A 124-amino-acid chain; its full sequence is MNISLLRTKIHRATVTGADLNYEGSVSICPDLIKASGLLMNERVDIYNCNNGARFSTYVIKGKKGEICLNGAAARHVQKGDLVIICSYCGLSMDEAKKHEPTVVFVNAKNKVTEKRKEDRKNNK.

The active-site Schiff-base intermediate with substrate; via pyruvic acid is the serine 25. Serine 25 carries the post-translational modification Pyruvic acid (Ser). Threonine 57 contacts substrate. The Proton donor role is filled by tyrosine 58. 71–73 (GAA) is a substrate binding site.

It belongs to the PanD family. Heterooctamer of four alpha and four beta subunits. Requires pyruvate as cofactor. Is synthesized initially as an inactive proenzyme, which is activated by self-cleavage at a specific serine bond to produce a beta-subunit with a hydroxyl group at its C-terminus and an alpha-subunit with a pyruvoyl group at its N-terminus.

It localises to the cytoplasm. It carries out the reaction L-aspartate + H(+) = beta-alanine + CO2. The protein operates within cofactor biosynthesis; (R)-pantothenate biosynthesis; beta-alanine from L-aspartate: step 1/1. Functionally, catalyzes the pyruvoyl-dependent decarboxylation of aspartate to produce beta-alanine. This Bdellovibrio bacteriovorus (strain ATCC 15356 / DSM 50701 / NCIMB 9529 / HD100) protein is Aspartate 1-decarboxylase.